The following is a 126-amino-acid chain: Large ribosomal subunit protein bL20 (126 aa).

Residues 1-15 (MARVKRAVNAQKKRR) are compositionally biased toward basic residues. The segment at 1–20 (MARVKRAVNAQKKRRTTLER) is disordered.

The protein belongs to the bacterial ribosomal protein bL20 family.

Binds directly to 23S ribosomal RNA and is necessary for the in vitro assembly process of the 50S ribosomal subunit. It is not involved in the protein synthesizing functions of that subunit. The polypeptide is Large ribosomal subunit protein bL20 (Beutenbergia cavernae (strain ATCC BAA-8 / DSM 12333 / CCUG 43141 / JCM 11478 / NBRC 16432 / NCIMB 13614 / HKI 0122)).